A 352-amino-acid polypeptide reads, in one-letter code: Molybdenum import ATP-binding protein ModC (352 aa).

An ABC transporter domain is found at 1 to 229 (MLELNFSQTL…SVMNPWLPKE (229 aa)). 31–38 (GVSGAGKT) provides a ligand contact to ATP. Residues 289–352 (QTSIRNVLRA…AQIKSVSITA (64 aa)) enclose the Mop domain.

It belongs to the ABC transporter superfamily. Molybdate importer (TC 3.A.1.8) family. In terms of assembly, the complex is composed of two ATP-binding proteins (ModC), two transmembrane proteins (ModB) and a solute-binding protein (ModA).

The protein resides in the cell inner membrane. The catalysed reaction is molybdate(out) + ATP + H2O = molybdate(in) + ADP + phosphate + H(+). Part of the ABC transporter complex ModABC involved in molybdenum import. Responsible for energy coupling to the transport system. This is Molybdenum import ATP-binding protein ModC from Shigella boydii serotype 4 (strain Sb227).